Consider the following 215-residue polypeptide: Heart- and neural crest derivatives-expressed protein 1 (215 aa).

Disordered regions lie at residues 53 to 109 (APDF…RTES) and 169 to 202 (VDGGRESKRKRELQQHEGFPPALGPGEKRIKGRT). Positions 65–75 (AAAAAATYGPD) are enriched in low complexity. The span at 92-104 (LGRRKGSGPKKER) shows a compositional bias: basic residues. The region spanning 94-146 (RRKGSGPKKERRRTESINSAFAELRECIPNVPADTKLSKIKTLRLATSYIAYL) is the bHLH domain. Thr107 is subject to Phosphothreonine; by PLK4. At Ser109 the chain carries Phosphoserine; by PLK4.

In terms of assembly, efficient DNA binding requires dimerization with another bHLH protein. Forms homodimers and heterodimers with TCF3 gene products E12 and E47, HAND2 and HEY1, HEY2 and HEYL (hairy-related transcription factors). Interacts with MDFIC. Interacts with SOX15; the interaction enhances HAND1-induced differentiation of trophoblast giant cells. Post-translationally, phosphorylation by PLK4 disrupts the interaction with MDFIC and leads to translocation into the nucleoplasm, allowing dimerization and transcription factor activity.

It localises to the nucleus. The protein resides in the nucleoplasm. The protein localises to the nucleolus. Its function is as follows. Transcription factor that plays an essential role in both trophoblast giant cell differentiation and in cardiac morphogenesis. Binds the DNA sequence 5'-NRTCTG-3' (non-canonical E-box). Acts as a transcriptional repressor of SOX15. In the adult, could be required for ongoing expression of cardiac-specific genes. The protein is Heart- and neural crest derivatives-expressed protein 1 (HAND1) of Oryctolagus cuniculus (Rabbit).